Here is a 334-residue protein sequence, read N- to C-terminus: Holliday junction branch migration complex subunit RuvB (334 aa).

Positions 4 to 184 (ADRLVSAGVI…FGIVQRLEFY (181 aa)) are large ATPase domain (RuvB-L). Residues Ile-23, Arg-24, Gly-65, Lys-68, Thr-69, Thr-70, 131 to 133 (EDY), Arg-174, Tyr-184, and Arg-221 each bind ATP. A Mg(2+)-binding site is contributed by Thr-69. A small ATPAse domain (RuvB-S) region spans residues 185–255 (RVEDLQHIVG…VASRALDMLS (71 aa)). A head domain (RuvB-H) region spans residues 258–334 (SEGFDYMDRK…YKHFGITREG (77 aa)). Arg-294, Arg-313, and Arg-318 together coordinate DNA.

It belongs to the RuvB family. Homohexamer. Forms an RuvA(8)-RuvB(12)-Holliday junction (HJ) complex. HJ DNA is sandwiched between 2 RuvA tetramers; dsDNA enters through RuvA and exits via RuvB. An RuvB hexamer assembles on each DNA strand where it exits the tetramer. Each RuvB hexamer is contacted by two RuvA subunits (via domain III) on 2 adjacent RuvB subunits; this complex drives branch migration. In the full resolvosome a probable DNA-RuvA(4)-RuvB(12)-RuvC(2) complex forms which resolves the HJ.

It localises to the cytoplasm. It catalyses the reaction ATP + H2O = ADP + phosphate + H(+). In terms of biological role, the RuvA-RuvB-RuvC complex processes Holliday junction (HJ) DNA during genetic recombination and DNA repair, while the RuvA-RuvB complex plays an important role in the rescue of blocked DNA replication forks via replication fork reversal (RFR). RuvA specifically binds to HJ cruciform DNA, conferring on it an open structure. The RuvB hexamer acts as an ATP-dependent pump, pulling dsDNA into and through the RuvAB complex. RuvB forms 2 homohexamers on either side of HJ DNA bound by 1 or 2 RuvA tetramers; 4 subunits per hexamer contact DNA at a time. Coordinated motions by a converter formed by DNA-disengaged RuvB subunits stimulates ATP hydrolysis and nucleotide exchange. Immobilization of the converter enables RuvB to convert the ATP-contained energy into a lever motion, pulling 2 nucleotides of DNA out of the RuvA tetramer per ATP hydrolyzed, thus driving DNA branch migration. The RuvB motors rotate together with the DNA substrate, which together with the progressing nucleotide cycle form the mechanistic basis for DNA recombination by continuous HJ branch migration. Branch migration allows RuvC to scan DNA until it finds its consensus sequence, where it cleaves and resolves cruciform DNA. This Erwinia tasmaniensis (strain DSM 17950 / CFBP 7177 / CIP 109463 / NCPPB 4357 / Et1/99) protein is Holliday junction branch migration complex subunit RuvB.